A 279-amino-acid polypeptide reads, in one-letter code: MAIRKYKPTTPGRRGSSVADFAEITRSTPEKSLLTPLPKKGGRNAHGRITARHQGGGHKRQYRIIDFKRVDKDGVPAKVAHIEYDPNRTARIALLHFLDGEKRYILAPKDLKQGDIVESGPGADIKPGNNLPLRNIPVGMTIHNVELRPGGGAKLARSAGTGIQLLGREGAYATLRMPSGEIRRVDVRCRASIGEIGNADQSNINWGKAGRMRWKGKRPTVRGVAMNPVDHPHGGGEGKTSGGRHPVNPQGKPEGRTRRKGQPSDRLIVRRRYATRKRG.

Disordered regions lie at residues Ser32 to His58 and Gly223 to Gly279. Composition is skewed to basic residues over residues Lys40–His58 and Val269–Gly279.

It belongs to the universal ribosomal protein uL2 family. Part of the 50S ribosomal subunit. Forms a bridge to the 30S subunit in the 70S ribosome.

In terms of biological role, one of the primary rRNA binding proteins. Required for association of the 30S and 50S subunits to form the 70S ribosome, for tRNA binding and peptide bond formation. It has been suggested to have peptidyltransferase activity; this is somewhat controversial. Makes several contacts with the 16S rRNA in the 70S ribosome. The polypeptide is Large ribosomal subunit protein uL2 (Salinispora tropica (strain ATCC BAA-916 / DSM 44818 / JCM 13857 / NBRC 105044 / CNB-440)).